The sequence spans 494 residues: UDP-N-acetylmuramate--L-alanine ligase (494 aa).

An ATP-binding site is contributed by 140 to 146 (GTHGKTT).

Belongs to the MurCDEF family.

The protein resides in the cytoplasm. The catalysed reaction is UDP-N-acetyl-alpha-D-muramate + L-alanine + ATP = UDP-N-acetyl-alpha-D-muramoyl-L-alanine + ADP + phosphate + H(+). It participates in cell wall biogenesis; peptidoglycan biosynthesis. In terms of biological role, cell wall formation. This Trichormus variabilis (strain ATCC 29413 / PCC 7937) (Anabaena variabilis) protein is UDP-N-acetylmuramate--L-alanine ligase.